A 691-amino-acid chain; its full sequence is Cyclic nucleotide-gated channel alpha-1 (691 aa).

The Cytoplasmic portion of the chain corresponds to 1–168 (MKKNIINTWY…PAGNMYYNWL (168 aa)). Residues 31 to 151 (ENGARSSFSD…KGKDKKEEEK (121 aa)) are disordered. The span at 39 to 56 (SDDDGDDDSASMFEESEN) shows a compositional bias: acidic residues. Basic and acidic residues-rich tracts occupy residues 57-76 (ETPH…DPSQ) and 112-151 (SKSG…EEEK). The helical transmembrane segment at 169 to 190 (FCITLPVMYNWTMVIARACFDE) threads the bilayer. Residues 191–200 (LQSDYLEYWI) lie on the Extracellular side of the membrane. A helical transmembrane segment spans residues 201–221 (IFDYLSDIVYLLDMFVRTRTG). Over 222 to 246 (YLEQGLLVREEAKLIEKYKSNLQFK) the chain is Cytoplasmic. Residues 247–265 (LDFLSVIPTDLLYFKLGWN) traverse the membrane as a helical segment. The Extracellular segment spans residues 266 to 270 (YPEIR). Residues 271-289 (LNRLLRISRMFEFFQRTET) form a helical membrane-spanning segment. Topologically, residues 290-296 (RTNYPNI) are cytoplasmic. Residues 294-402 (PNIFRISNLV…GNIGSMISNM (109 aa)) are ion conduction pathway. A helical transmembrane segment spans residues 297–320 (FRISNLVMYIVIIIHWNACVYFSI). Topologically, residues 321–343 (SKAIGFGNDTWVYPDVNDPEFGR) are extracellular. Asparagine 328 carries an N-linked (GlcNAc...) asparagine glycan. 2 consecutive transmembrane segments (helical) span residues 344 to 378 (LARK…VFVV) and 379 to 403 (VDFL…SNMN). The tract at residues 361-364 (TIGE) is selectivity filter. Residues 404–480 (AARAEFQARI…DTLKKVRIFA (77 aa)) form a C-linker region. Residues 404-691 (AARAEFQARI…ESRPLDSTQD (288 aa)) are Cytoplasmic-facing. The segment at 484-604 (AGLLVELVLK…EEKGKQILMK (121 aa)) is cyclic nucleotide-binding domain. Glycine 544, serine 547, arginine 560, and threonine 561 together coordinate 3',5'-cyclic GMP. Positions 560 and 561 each coordinate 3',5'-cyclic AMP. Positions 622 to 676 (LEEKVTRMEGSVDLLQTRFARILAEYESMQQKLKQRLTKVERFLKPIIDTEFSAL) form a coiled coil.

The protein belongs to the cyclic nucleotide-gated cation channel (TC 1.A.1.5) family. CNGA1 subfamily. As to quaternary structure, forms heterotetrameric channels composed of CNGA1 and CNGB1 subunits with 3:1 stoichiometry. May also form cyclic nucleotide-activated homotetrameric channels, that are efficiently activated by saturating cGMP, but poorly activated by saturating cAMP compared to the heterotetramer with CNGB1. The channel binds Ca(2+)-bound CALM1 via CaM1 and CaM2 regions of the CNGB1 subunit; this interaction modulates the affinity of the channel for cNMPs in response to intracellular Ca(2+) levels.

It localises to the cell membrane. The enzyme catalyses Ca(2+)(in) = Ca(2+)(out). It carries out the reaction Na(+)(in) = Na(+)(out). It catalyses the reaction K(+)(in) = K(+)(out). The catalysed reaction is NH4(+)(in) = NH4(+)(out). The enzyme catalyses Rb(+)(in) = Rb(+)(out). It carries out the reaction Li(+)(in) = Li(+)(out). It catalyses the reaction Cs(+)(in) = Cs(+)(out). Functionally, pore-forming subunit of the rod cyclic nucleotide-gated channel. Mediates rod photoresponses at dim light converting transient changes in intracellular cGMP levels into electrical signals. In the dark, cGMP levels are high and keep the channel open enabling a steady inward current carried by Na(+) and Ca(2+) ions that leads to membrane depolarization and neurotransmitter release from synaptic terminals. Upon photon absorption cGMP levels decline leading to channel closure and membrane hyperpolarization that ultimately slows neurotransmitter release and signals the presence of light, the end point of the phototransduction cascade. Conducts cGMP- and cAMP-gated ion currents, with permeability for monovalent and divalent cations. The selectivity for Ca(2+) over Na(+) increases with cGMP concentrations, whereas the selectivity among monovalent ions is independent of the cGMP levels. This chain is Cyclic nucleotide-gated channel alpha-1, found in Canis lupus familiaris (Dog).